Reading from the N-terminus, the 398-residue chain is ATP-dependent RNA helicase eIF4A (398 aa).

A Q motif motif is present at residues 25 to 53; that stretch reads DSFDSMDLKPELLRGIYAYGFERPSAIQQ. The Helicase ATP-binding domain maps to 56–226; it reads IMPIIKGSDV…TKFMRDPVRI (171 aa). 69 to 76 lines the ATP pocket; it reads AQSGTGKT. Positions 174 to 177 match the DEAD box motif; the sequence is DEAD. A Helicase C-terminal domain is found at 237–398; the sequence is GIKQFYIAVE…EMPMNVADLI (162 aa).

This sequence belongs to the DEAD box helicase family. eIF4A subfamily. Component of the eIF4F complex, which composition varies with external and internal environmental conditions. It is composed of at least eIF4A, eIF4E and eIF4G.

The protein resides in the cytoplasm. The enzyme catalyses ATP + H2O = ADP + phosphate + H(+). Its function is as follows. ATP-dependent RNA helicase which is a subunit of the eIF4F complex involved in cap recognition and is required for mRNA binding to ribosome. In the current model of translation initiation, eIF4A unwinds RNA secondary structures in the 5'-UTR of mRNAs which is necessary to allow efficient binding of the small ribosomal subunit, and subsequent scanning for the initiator codon. The sequence is that of ATP-dependent RNA helicase eIF4A (tif1) from Aspergillus clavatus (strain ATCC 1007 / CBS 513.65 / DSM 816 / NCTC 3887 / NRRL 1 / QM 1276 / 107).